The chain runs to 143 residues: Large-conductance mechanosensitive channel (143 aa).

Transmembrane regions (helical) follow at residues Phe10–Ser30 and Gly89–Val109.

Belongs to the MscL family. Homopentamer.

It is found in the cell inner membrane. Channel that opens in response to stretch forces in the membrane lipid bilayer. May participate in the regulation of osmotic pressure changes within the cell. This is Large-conductance mechanosensitive channel from Burkholderia cenocepacia (strain HI2424).